The sequence spans 484 residues: Glutamate--tRNA ligase (484 aa).

The short motif at 11 to 21 is the 'HIGH' region element; it reads PSPTGLLHIGN. The short motif at 255–259 is the 'KMSKS' region element; sequence KLSKR. Position 258 (Lys-258) interacts with ATP.

The protein belongs to the class-I aminoacyl-tRNA synthetase family. Glutamate--tRNA ligase type 1 subfamily. As to quaternary structure, monomer.

The protein resides in the cytoplasm. It carries out the reaction tRNA(Glu) + L-glutamate + ATP = L-glutamyl-tRNA(Glu) + AMP + diphosphate. Its function is as follows. Catalyzes the attachment of glutamate to tRNA(Glu) in a two-step reaction: glutamate is first activated by ATP to form Glu-AMP and then transferred to the acceptor end of tRNA(Glu). The sequence is that of Glutamate--tRNA ligase from Streptococcus thermophilus (strain CNRZ 1066).